The sequence spans 348 residues: Phosphoribosylformylglycinamidine cyclo-ligase (348 aa).

This sequence belongs to the AIR synthase family.

Its subcellular location is the cytoplasm. The catalysed reaction is 2-formamido-N(1)-(5-O-phospho-beta-D-ribosyl)acetamidine + ATP = 5-amino-1-(5-phospho-beta-D-ribosyl)imidazole + ADP + phosphate + H(+). It participates in purine metabolism; IMP biosynthesis via de novo pathway; 5-amino-1-(5-phospho-D-ribosyl)imidazole from N(2)-formyl-N(1)-(5-phospho-D-ribosyl)glycinamide: step 2/2. This chain is Phosphoribosylformylglycinamidine cyclo-ligase, found in Cereibacter sphaeroides (strain ATCC 17023 / DSM 158 / JCM 6121 / CCUG 31486 / LMG 2827 / NBRC 12203 / NCIMB 8253 / ATH 2.4.1.) (Rhodobacter sphaeroides).